The primary structure comprises 123 residues: Chaperone protein SycN (123 aa).

Interacts with YscB to form a complex which specifically binds to YopN.

Its subcellular location is the cytoplasm. The protein resides in the cell inner membrane. In terms of biological role, functions as a specific chaperone for YopN. It could facilitate the secretion and the subsequent translocation of YopN. The protein is Chaperone protein SycN (sycN) of Yersinia enterocolitica.